A 131-amino-acid polypeptide reads, in one-letter code: Small ribosomal subunit protein uS8 (131 aa).

Belongs to the universal ribosomal protein uS8 family. As to quaternary structure, part of the 30S ribosomal subunit. Contacts proteins S5 and S12.

In terms of biological role, one of the primary rRNA binding proteins, it binds directly to 16S rRNA central domain where it helps coordinate assembly of the platform of the 30S subunit. The polypeptide is Small ribosomal subunit protein uS8 (Pelodictyon phaeoclathratiforme (strain DSM 5477 / BU-1)).